The following is a 367-amino-acid chain: Chorismate synthase (367 aa).

Arginine 48 contributes to the NADP(+) binding site. FMN is bound by residues 125–127, 243–244, glycine 283, 298–302, and arginine 324; these read RSS, NA, and KPTSS.

The protein belongs to the chorismate synthase family. As to quaternary structure, homotetramer. Requires FMNH2 as cofactor.

It catalyses the reaction 5-O-(1-carboxyvinyl)-3-phosphoshikimate = chorismate + phosphate. The protein operates within metabolic intermediate biosynthesis; chorismate biosynthesis; chorismate from D-erythrose 4-phosphate and phosphoenolpyruvate: step 7/7. In terms of biological role, catalyzes the anti-1,4-elimination of the C-3 phosphate and the C-6 proR hydrogen from 5-enolpyruvylshikimate-3-phosphate (EPSP) to yield chorismate, which is the branch point compound that serves as the starting substrate for the three terminal pathways of aromatic amino acid biosynthesis. This reaction introduces a second double bond into the aromatic ring system. This is Chorismate synthase from Psychrobacter sp. (strain PRwf-1).